The following is a 295-amino-acid chain: Acetaldehyde dehydrogenase 2 (295 aa).

17–20 provides a ligand contact to NAD(+); it reads TGNI. Residue Cys132 is the Acyl-thioester intermediate of the active site. Residues 164–172 and Asn275 contribute to the NAD(+) site; that span reads SVGPASRAN.

It belongs to the acetaldehyde dehydrogenase family.

It carries out the reaction acetaldehyde + NAD(+) + CoA = acetyl-CoA + NADH + H(+). This is Acetaldehyde dehydrogenase 2 from Salinispora arenicola (strain CNS-205).